The following is a 210-amino-acid chain: Na(+)-translocating NADH-quinone reductase subunit D (210 aa).

The next 5 helical transmembrane spans lie at 42–62 (FVMT…VSLI), 72–92 (IIVQ…VLKA), 103–123 (VFVS…AFAM), 131–151 (FIDG…VAFF), and 178–198 (NGLM…IWAI).

This sequence belongs to the NqrDE/RnfAE family. As to quaternary structure, composed of six subunits; NqrA, NqrB, NqrC, NqrD, NqrE and NqrF.

The protein localises to the cell inner membrane. The catalysed reaction is a ubiquinone + n Na(+)(in) + NADH + H(+) = a ubiquinol + n Na(+)(out) + NAD(+). Functionally, NQR complex catalyzes the reduction of ubiquinone-1 to ubiquinol by two successive reactions, coupled with the transport of Na(+) ions from the cytoplasm to the periplasm. NqrA to NqrE are probably involved in the second step, the conversion of ubisemiquinone to ubiquinol. This Aliivibrio fischeri (strain ATCC 700601 / ES114) (Vibrio fischeri) protein is Na(+)-translocating NADH-quinone reductase subunit D.